The sequence spans 515 residues: 2-isopropylmalate synthase (515 aa).

The Pyruvate carboxyltransferase domain maps to 4-266; it reads ISVFDTTLRD…ETGLILKEIK (263 aa). Mn(2+)-binding residues include Asp-13, His-201, His-203, and Asn-237. The interval 391–515 is regulatory domain; sequence ELQTLQVNYG…AEVYGSKVEV (125 aa).

It belongs to the alpha-IPM synthase/homocitrate synthase family. LeuA type 1 subfamily. In terms of assembly, homodimer. Requires Mn(2+) as cofactor.

The protein localises to the cytoplasm. It catalyses the reaction 3-methyl-2-oxobutanoate + acetyl-CoA + H2O = (2S)-2-isopropylmalate + CoA + H(+). It functions in the pathway amino-acid biosynthesis; L-leucine biosynthesis; L-leucine from 3-methyl-2-oxobutanoate: step 1/4. In terms of biological role, catalyzes the condensation of the acetyl group of acetyl-CoA with 3-methyl-2-oxobutanoate (2-ketoisovalerate) to form 3-carboxy-3-hydroxy-4-methylpentanoate (2-isopropylmalate). The protein is 2-isopropylmalate synthase of Halalkalibacterium halodurans (strain ATCC BAA-125 / DSM 18197 / FERM 7344 / JCM 9153 / C-125) (Bacillus halodurans).